Reading from the N-terminus, the 328-residue chain is tRNA uridine(34) hydroxylase (328 aa).

Positions 130 to 224 constitute a Rhodanese domain; it reads LDEDTVVLDT…YGKDPEVQGE (95 aa). The active-site Cysteine persulfide intermediate is the cysteine 184.

This sequence belongs to the TrhO family.

It carries out the reaction uridine(34) in tRNA + AH2 + O2 = 5-hydroxyuridine(34) in tRNA + A + H2O. Functionally, catalyzes oxygen-dependent 5-hydroxyuridine (ho5U) modification at position 34 in tRNAs. In Streptococcus pyogenes serotype M28 (strain MGAS6180), this protein is tRNA uridine(34) hydroxylase.